A 570-amino-acid polypeptide reads, in one-letter code: Developmental and secondary metabolism regulator veA (570 aa).

4 disordered regions span residues 1–24 (MATRPPLMPPANETESSVSRISRE), 39–60 (ERARACGAGAKSSADRRPVDPP), 266–491 (DMYA…LGSG), and 504–541 (KRSHEETFGSDERPLHNGMRPDMDQYPSMGRKQPDYGR). The region spanning 25 to 231 (GKKITYKLSV…AEQGCRVRIR (207 aa)) is the Velvet domain. A Nuclear localization signal motif is present at residues 39-44 (ERARAC). The segment covering 278-287 (STSISTTADT) has biased composition (polar residues). Over residues 315-335 (SMPAASAAPAPAPVHSPATSA) the composition is skewed to low complexity. Composition is skewed to polar residues over residues 336–354 (QTSSYQSHLSFGATQSQYP), 363–395 (QSATPTNTYSPHPSYSHSRNPSNGTEYDATSSG), and 427–445 (NMQTSTDSRSSDANAYPTL). The interval 454 to 493 (PTPANHVTSLPPLKVLSGEYSHPSQPNAQSPHHDLGSGKR) is PEST. The segment covering 505-526 (RSHEETFGSDERPLHNGMRPDM) has biased composition (basic and acidic residues).

This sequence belongs to the velvet family. VeA subfamily. As to quaternary structure, component of the heterotrimeric velvet complex composed of laeA, veA and velB; VeA acting as a bridging protein between laeA and velB.

The protein resides in the nucleus. The protein localises to the cytoplasm. Functionally, component of the velvet transcription factor complex that controls sexual/asexual developmental ratio in response to light, promoting sexual development in the darkness while stimulating asexual sporulation under illumination. The velvet complex hat acts as a global regulator for secondary metabolite gene expression. Controls the expression of hundreds of genes, including those comprising more than a dozen known secondary metabolite gene clusters. Controls the expression of the gliotoxin gene cluster. Controls the expression of the fumagillin, fumitremorgin G, fumigaclavine C and glionitrin gene clusters. The regulation of the fumagillin gene cluster and fumagillin production is performed through direct control of the expression of fumR. Negatively regulates conidiation. Required for normal protease activity. The protein is Developmental and secondary metabolism regulator veA of Aspergillus fumigatus (strain ATCC MYA-4609 / CBS 101355 / FGSC A1100 / Af293) (Neosartorya fumigata).